The following is a 112-amino-acid chain: Ig kappa chain V-II region MOPC 167 (112 aa).

Residues 1-23 (DIVITQDELSNPVTSGESVSISC) are framework-1. Cysteine 23 and cysteine 93 are disulfide-bonded. The complementarity-determining-1 stretch occupies residues 24–39 (RSSKSLLYKDGKTYLN). A framework-2 region spans residues 40–54 (WFLQRPGQSPQLLIS). Residues 55–61 (LMSTRAS) are complementarity-determining-2. The framework-3 stretch occupies residues 62 to 93 (GVSDRFSGSGSRTDFTLEISRVKAEDVGVYYC). Positions 94-102 (QQLVEYPLT) are complementarity-determining-3. The tract at residues 103 to 112 (FGAGTKLELK) is framework-4.

In Mus musculus (Mouse), this protein is Ig kappa chain V-II region MOPC 167.